A 303-amino-acid polypeptide reads, in one-letter code: GTPase Era (303 aa).

The region spanning Lys7–Glu174 is the Era-type G domain. The interval Gly15–Ser22 is G1. Residue Gly15–Ser22 participates in GTP binding. The G2 stretch occupies residues Gln41–Asn45. The segment at Asp62–Gly65 is G3. Residues Asp62 to Ile66 and Asn124 to Asp127 each bind GTP. Positions Asn124–Asp127 are G4. The tract at residues Ile153 to Ala155 is G5. Residues Thr205–Asn283 enclose the KH type-2 domain.

It belongs to the TRAFAC class TrmE-Era-EngA-EngB-Septin-like GTPase superfamily. Era GTPase family. As to quaternary structure, monomer.

It localises to the cytoplasm. The protein localises to the cell membrane. An essential GTPase that binds both GDP and GTP, with rapid nucleotide exchange. Plays a role in 16S rRNA processing and 30S ribosomal subunit biogenesis and possibly also in cell cycle regulation and energy metabolism. The protein is GTPase Era of Lactococcus lactis subsp. lactis (strain IL1403) (Streptococcus lactis).